We begin with the raw amino-acid sequence, 487 residues long: MELLRSARPHPKEKLKNVIEWFHWLLREAELYDVRYPVKGAYVWRPYGMKLRRNVEELIRRVHDETGHEEVLFPVFIPYEFFGKESQHIRGFEKEVFWVSKGGEGGERLVLRPTSETAIMPMVKLWIQDYKDLPLRLYQIVSVFRAETKMTHPMIRLREISMFKEAHTVHVDREDAERQVREAVEIYKRIFDEMCLAYMINKRPDWDKFAGAEYTIAFDTVLPDGRTLQIGTAHYLGTNFTRVFEVTYLDADGTRKLAHTTSYGISERSIAAMLITHGDDGGTTLPPKLAPIQIAVVPIYYSDEEMPLVMKFVEEVVAALKGAGLRLHVDDRRDKTPGWKFYYWELKGVPLRLEVGKRDVEKRQVVVTRRDTLEKYAVALGELVDAVRELMKAVEDNLRRRAWEELRSKIVKVQSLEEAKKAIKEGKVVEVPWSGDNQCGMKIQELLGADALGIPMDSEASIGGYDARDLACGERRAELWLRLSERY.

It belongs to the class-II aminoacyl-tRNA synthetase family. ProS type 3 subfamily. In terms of assembly, homodimer.

The protein resides in the cytoplasm. It carries out the reaction tRNA(Pro) + L-proline + ATP = L-prolyl-tRNA(Pro) + AMP + diphosphate. In terms of biological role, catalyzes the attachment of proline to tRNA(Pro) in a two-step reaction: proline is first activated by ATP to form Pro-AMP and then transferred to the acceptor end of tRNA(Pro). This is Proline--tRNA ligase from Pyrobaculum neutrophilum (strain DSM 2338 / JCM 9278 / NBRC 100436 / V24Sta) (Thermoproteus neutrophilus).